We begin with the raw amino-acid sequence, 143 residues long: Nucleoside diphosphate kinase (143 aa).

ATP-binding residues include K11, F59, R87, T93, R104, and N114. The active-site Pros-phosphohistidine intermediate is H117.

Belongs to the NDK family. In terms of assembly, homotetramer. It depends on Mg(2+) as a cofactor.

It localises to the cytoplasm. The enzyme catalyses a 2'-deoxyribonucleoside 5'-diphosphate + ATP = a 2'-deoxyribonucleoside 5'-triphosphate + ADP. It carries out the reaction a ribonucleoside 5'-diphosphate + ATP = a ribonucleoside 5'-triphosphate + ADP. In terms of biological role, major role in the synthesis of nucleoside triphosphates other than ATP. The ATP gamma phosphate is transferred to the NDP beta phosphate via a ping-pong mechanism, using a phosphorylated active-site intermediate. The sequence is that of Nucleoside diphosphate kinase from Clostridium perfringens (strain SM101 / Type A).